The chain runs to 1142 residues: MSQDIQTQNSYSDELYSSQIYSTQQPQQPQQQPQQQQSTFSSQQSQSSSYDFIYSTPQIHSQNSQNSQFSQNPLYDDFIHSTQNSYSQRVSSQRSYSQKSSSSQISFSQIPSSQIQSSQIPSSQIHSSQIPSSQNQSSQKSQFSFSQIPSSQIPSSQKRFFQSQNDDFVPSSQVTSLQDICLPQPIQQQQQQQQQQQQQQQQQQQQQQQQQQQQQQQQCQPQQQQTQQQQQQQQQQQQQQQQQQQQQQQQQQTQQQQQQPQEDDDDYDDYDGYDNYEDFVYNEGEEGEEDYEDYEQENDDDDDEDEDDDDDDDDDDDDEEEEEESQQQHIRSRALQSRSSQSRPLLRSGFKSPISRLSQTKTSPEYIYISSQSNTHTNQLGQSSQQTNSPNVHFNSLQQKKKQQQQQQQQQQQQQQQQQQQQQQQQQQQSQQIIGSQSSQSSQLPPTQPPVEVPVNLGRLIPINASHIPINLNLKREDRIVVGRSSSCDARLIDNYLTISGKHCEIYRADNLTCLKHIPLCKDKTDCHKNFGMLIVHDISSNGSYINGELIGNGKTRILRSDDILSLGHPSGDLKFIFESEFQFNFILDIKDNVNNLNENLDYKKLRTAYDNARIENKNCALRDYYFVKEIGSGGYGIVYEGLYKLNGKRVAIKHIDLLKNGSTSKSMELVSKEYNALKNIKHRNVIEFFDIVFSSTDCFFIVELATNDLSNLLRKRCVDEDDIKRICKQLLLGFNYLHNLGIVHRDLKPENILYNEFKQGFSIKITDFGLSSFVEESQYLQTFCGTPLFFAPEVIANNFFSNGYGKSCDLWSIGVTLYLSLCKYKPFIVDCRDLYHSFINGNLGFTSKKWAKISNYAKDLVRRLLVIDPEHRITIKEALNHPWFTQDRRFFKKYPKHYKSRAQPKTQFFVECFNVYYDLKSETGFICFREHFDNLETNYALFKQNFDNNNNNNNNNNNNNNNNNNNNNNNNNINNNNNNINNNNINNNNNNNNNNNNNTNTNNINNNNNNYNNSHNHNNNNHNHNHNLNNHNHNNNHHHNHNHNHNHNHNHNHNHNHNHNHNHNHNNHNNNNNNNNNNNNNNNNNNNNNNNNNNNNNNNNNNNNNNNNYYNNNINNINNNINNNINNNNNYHQQYTQHTTM.

Over residues 1–16 (MSQDIQTQNSYSDELY) the composition is skewed to polar residues. Disordered stretches follow at residues 1 to 359 (MSQD…RLSQ), 374 to 404 (NTHT…KKQQ), and 432 to 451 (QIIG…QPPV). 2 stretches are compositionally biased toward low complexity: residues 17–72 (SSQI…FSQN) and 83–157 (QNSY…PSSQ). The segment covering 158–178 (KRFFQSQNDDFVPSSQVTSLQ) has biased composition (polar residues). Residues 186–302 (IQQQQQQQQQ…DYEQENDDDD (117 aa)) adopt a coiled-coil conformation. Residues 187–260 (QQQQQQQQQQ…QQTQQQQQQP (74 aa)) show a composition bias toward low complexity. Acidic residues-rich tracts occupy residues 261 to 277 (QEDD…DNYE) and 283 to 325 (EGEE…EEES). Low complexity predominate over residues 333–348 (RALQSRSSQSRPLLRS). A compositionally biased stretch (polar residues) spans 374–397 (NTHTNQLGQSSQQTNSPNVHFNSL). Positions 393–434 (HFNSLQQKKKQQQQQQQQQQQQQQQQQQQQQQQQQQQSQQII) form a coiled coil. Low complexity predominate over residues 432–443 (QIIGSQSSQSSQ). The 72-residue stretch at 480–551 (IVVGRSSSCD…NGSYINGELI (72 aa)) folds into the FHA domain. A Protein kinase domain is found at 625–885 (YYFVKEIGSG…IKEALNHPWF (261 aa)). ATP-binding positions include 631-639 (IGSGGYGIV) and lysine 654. Aspartate 747 (proton acceptor) is an active-site residue. The segment at 947–1142 (FDNNNNNNNN…HQQYTQHTTM (196 aa)) is disordered. The span at 949-1034 (NNNNNNNNNN…HNHNLNNHNH (86 aa)) shows a compositional bias: low complexity. Residues 1035-1067 (NNNHHHNHNHNHNHNHNHNHNHNHNHNHNHNHN) are compositionally biased toward basic residues. Residues 1068 to 1133 (NHNNNNNNNN…NNINNNNNYH (66 aa)) are compositionally biased toward low complexity. Residues 1090 to 1132 (NNNNNNNNNNNNNNNNNNNNYYNNNINNINNNINNNINNNNNY) adopt a coiled-coil conformation.

This sequence belongs to the protein kinase superfamily. CAMK Ser/Thr protein kinase family. CHK2 subfamily.

The enzyme catalyses L-seryl-[protein] + ATP = O-phospho-L-seryl-[protein] + ADP + H(+). It carries out the reaction L-threonyl-[protein] + ATP = O-phospho-L-threonyl-[protein] + ADP + H(+). This chain is Probable serine/threonine-protein kinase fhkB (fhkB), found in Dictyostelium discoideum (Social amoeba).